The chain runs to 389 residues: Galactokinase (389 aa).

33 to 36 lines the substrate pocket; that stretch reads EHTD. ATP contacts are provided by residues Ser-67 and 124 to 130; that span reads GAGLSSS. Positions 130 and 162 each coordinate Mg(2+). The active-site Proton acceptor is the Asp-174. Tyr-224 contacts substrate.

It belongs to the GHMP kinase family. GalK subfamily.

The protein resides in the cytoplasm. The catalysed reaction is alpha-D-galactose + ATP = alpha-D-galactose 1-phosphate + ADP + H(+). The protein operates within carbohydrate metabolism; galactose metabolism. Its function is as follows. Catalyzes the transfer of the gamma-phosphate of ATP to D-galactose to form alpha-D-galactose-1-phosphate (Gal-1-P). This Fusobacterium nucleatum subsp. nucleatum (strain ATCC 25586 / DSM 15643 / BCRC 10681 / CIP 101130 / JCM 8532 / KCTC 2640 / LMG 13131 / VPI 4355) protein is Galactokinase.